A 90-amino-acid polypeptide reads, in one-letter code: Small ribosomal subunit protein uS15c (90 aa).

Belongs to the universal ribosomal protein uS15 family. In terms of assembly, part of the 30S ribosomal subunit.

It is found in the plastid. The protein localises to the chloroplast. The sequence is that of Small ribosomal subunit protein uS15c (rps15-A) from Oryza nivara (Indian wild rice).